The chain runs to 235 residues: Small ribosomal subunit protein uS3 (235 aa).

Positions 39–107 (IREFIKEECK…ELHLNIVEVR (69 aa)) constitute a KH type-2 domain. The segment at 213–235 (QARDRKAQELQDGPAPRGAGGRR) is disordered.

Belongs to the universal ribosomal protein uS3 family. As to quaternary structure, part of the 30S ribosomal subunit. Forms a tight complex with proteins S10 and S14.

Functionally, binds the lower part of the 30S subunit head. Binds mRNA in the 70S ribosome, positioning it for translation. This is Small ribosomal subunit protein uS3 from Ruegeria pomeroyi (strain ATCC 700808 / DSM 15171 / DSS-3) (Silicibacter pomeroyi).